A 212-amino-acid polypeptide reads, in one-letter code: Prolactin (212 aa).

The first 24 residues, 1-24 (MAHRETNGSKLFITVLCMVAACSA), serve as a signal peptide directing secretion. 2 disulfide bridges follow: cysteine 70–cysteine 185 and cysteine 202–cysteine 212.

Belongs to the somatotropin/prolactin family.

It is found in the secreted. This chain is Prolactin (prl), found in Sparus aurata (Gilthead sea bream).